The sequence spans 468 residues: Alpha-2A adrenergic receptor (468 aa).

Over 1–48 (MFRQEQPLAEGSFAPMGSLQPDAGNASWNGTEAPGGGARATPYSLQVT) the chain is Extracellular. N-linked (GlcNAc...) asparagine glycosylation is found at asparagine 25 and asparagine 29. Residues 49-74 (LTLVCLAGLLMLFTVFGNVLVIIAVF) form a helical membrane-spanning segment. The Cytoplasmic portion of the chain corresponds to 75–85 (TSRALKAPQNL). Residues 86–111 (FLVSLASADILVATLVIPFSLANEVM) form a helical membrane-spanning segment. The Extracellular portion of the chain corresponds to 112-121 (GYWYFGKAWC). Cysteine 121 and cysteine 203 are oxidised to a cystine. Residues 122-144 (EIYLALDVLFCTSSIVHLCAISL) traverse the membrane as a helical segment. At 145–164 (DRYWSITQAIEYNLKRTPRR) the chain is on the cytoplasmic side. The helical transmembrane segment at 165–188 (IKAIIVTVWVISAVISFPPLISFE) threads the bilayer. The Extracellular segment spans residues 189–207 (KKRGRSGQPSAEPRCEIND). A helical membrane pass occupies residues 208 to 232 (QKWYVISSSIGSFFAPCLIMILVYV). Over 233-392 (RIYQIAKRRT…RQNREKRFTF (160 aa)) the chain is Cytoplasmic. 2 disordered regions span residues 242 to 279 (TRVP…VGPV) and 291 to 381 (NGAP…SRWR). Residues 315–332 (SSEHAERPPGSRRSERGP) show a composition bias toward basic and acidic residues. The residue at position 348 (serine 348) is a Phosphoserine. The span at 351-366 (RRGPGATGLGAPTAGP) shows a compositional bias: low complexity. Arginine 370 carries the post-translational modification Omega-N-methylarginine. Residues 393–417 (VLAVVIGVFVVCWFPFFFTYTLTAI) form a helical membrane-spanning segment. Topologically, residues 418-427 (GCPVPPTLFK) are extracellular. The chain crosses the membrane as a helical span at residues 428–448 (FFFWFGYCNSSLNPVIYTIFN). The Cytoplasmic segment spans residues 449–468 (HDFRRAFKKILCRGDRKRIV). Cysteine 460 carries the S-palmitoyl cysteine lipid modification.

This sequence belongs to the G-protein coupled receptor 1 family. Adrenergic receptor subfamily. ADRA2A sub-subfamily. As to quaternary structure, component of the ADA2A-containing complex (ATAC), composed of KAT14, KAT2A, TADA2L, TADA3L, ZZ3, MBIP, WDR5, YEATS2, CCDC101 and DR1. In terms of tissue distribution, retina, brain and olfactory lobe.

The protein resides in the cell membrane. Functionally, alpha-2 adrenergic receptors mediate the catecholamine-induced inhibition of adenylate cyclase through the action of G proteins. Component of the ATAC complex, a complex with histone acetyltransferase activity on histones H3 and H4. The protein is Alpha-2A adrenergic receptor of Bos taurus (Bovine).